We begin with the raw amino-acid sequence, 195 residues long: Peptidyl-tRNA hydrolase (195 aa).

Tyrosine 17 provides a ligand contact to tRNA. Histidine 22 serves as the catalytic Proton acceptor. TRNA is bound by residues tyrosine 68, asparagine 70, and asparagine 116.

Belongs to the PTH family. As to quaternary structure, monomer.

The protein resides in the cytoplasm. The enzyme catalyses an N-acyl-L-alpha-aminoacyl-tRNA + H2O = an N-acyl-L-amino acid + a tRNA + H(+). Its function is as follows. Hydrolyzes ribosome-free peptidyl-tRNAs (with 1 or more amino acids incorporated), which drop off the ribosome during protein synthesis, or as a result of ribosome stalling. Functionally, catalyzes the release of premature peptidyl moieties from peptidyl-tRNA molecules trapped in stalled 50S ribosomal subunits, and thus maintains levels of free tRNAs and 50S ribosomes. This Shewanella sp. (strain MR-4) protein is Peptidyl-tRNA hydrolase.